An 895-amino-acid polypeptide reads, in one-letter code: Probable inorganic carbon transporter subunit DabA 1 (895 aa).

Residues Cys-398, Asp-400, His-581, and Cys-596 each coordinate Zn(2+).

It belongs to the inorganic carbon transporter (TC 9.A.2) DabA family. As to quaternary structure, forms a complex with DabB. Zn(2+) is required as a cofactor.

It localises to the cell inner membrane. In terms of biological role, part of an energy-coupled inorganic carbon pump. In Rhodopirellula baltica (strain DSM 10527 / NCIMB 13988 / SH1), this protein is Probable inorganic carbon transporter subunit DabA 1.